Reading from the N-terminus, the 700-residue chain is Tectonic-2 (700 aa).

The N-terminal stretch at 1–25 (MGSLSPLSFLWGLLLLQGVLRPLRG) is a signal peptide. The Extracellular portion of the chain corresponds to 26–665 (DPVFIPPFIR…YYQGEPRPQC (640 aa)). Residues Asn-76, Asn-82, Asn-146, Asn-156, and Asn-389 are each glycosylated (N-linked (GlcNAc...) asparagine). A helical membrane pass occupies residues 666–682 (VAKGLMLLSLLMLAILL). At 683-700 (RHPWVGMCKAWSSASIQH) the chain is on the cytoplasmic side.

The protein belongs to the tectonic family. As to quaternary structure, part of the tectonic-like complex (also named B9 complex).

It is found in the membrane. The protein resides in the cytoplasm. It localises to the cytoskeleton. The protein localises to the cilium basal body. Its function is as follows. Component of the tectonic-like complex, a complex localized at the transition zone of primary cilia and acting as a barrier that prevents diffusion of transmembrane proteins between the cilia and plasma membranes. Required for hedgehog signaling transduction. The polypeptide is Tectonic-2 (Tctn2) (Rattus norvegicus (Rat)).